The sequence spans 524 residues: uncharacterized protein (524 aa).

Residues 83-101 (NSTPSKQAKPLQRNSPYQG) show a composition bias toward polar residues. Disordered stretches follow at residues 83 to 108 (NSTPSKQAKPLQRNSPYQGNSQSENQ) and 155 to 179 (PPCNIETNEDDSGNNEYNNNKKRPR).

The protein localises to the cytoplasm. This is an uncharacterized protein from Saccharomyces cerevisiae (strain ATCC 204508 / S288c) (Baker's yeast).